The primary structure comprises 255 residues: MQVKRVKVFKIRNETEAVEDDFVAEEEPLEVRTCYDDCQTFAIIMRTPGNDKELVLGFLYSEGAIDTIDDVSSVSIKGDNVVEVRLNKPLKVKVREMIVNSSCGVCGRAFLYTLNILKCNTRVSRDVIFSLPEKLKENQEVFKITGGLHAAALFTTSGELNYLYEDVGRHNAVDKLIGRLLLERKIPASNYIMQVSGRLGYEIVSKGIKAGIPIICGISAPTSLAVDIAEEAGVTLIGFLRGNSFNIYTHKERVI.

Cys103 functions as the Cysteine persulfide intermediate in the catalytic mechanism.

This sequence belongs to the FdhD family.

The protein localises to the cytoplasm. Required for formate dehydrogenase (FDH) activity. Acts as a sulfur carrier protein that transfers sulfur from IscS to the molybdenum cofactor prior to its insertion into FDH. The sequence is that of Sulfur carrier protein FdhD from Sulfurisphaera tokodaii (strain DSM 16993 / JCM 10545 / NBRC 100140 / 7) (Sulfolobus tokodaii).